Consider the following 191-residue polypeptide: LOB domain-containing protein 19 (191 aa).

In terms of domain architecture, LOB spans 15 to 117 (GPCGACKFLR…AELAHVQARL (103 aa)).

The protein belongs to the LOB domain-containing protein family. Expressed in shoots, roots and floral tissues, but not in stems or leaves.

The polypeptide is LOB domain-containing protein 19 (LBD19) (Arabidopsis thaliana (Mouse-ear cress)).